A 242-amino-acid chain; its full sequence is Biosynthetic peptidoglycan transglycosylase (242 aa).

A helical membrane pass occupies residues 19 to 39 (ILAALAVFWGGGIALFSVVPV).

Belongs to the glycosyltransferase 51 family.

The protein resides in the cell inner membrane. It catalyses the reaction [GlcNAc-(1-&gt;4)-Mur2Ac(oyl-L-Ala-gamma-D-Glu-L-Lys-D-Ala-D-Ala)](n)-di-trans,octa-cis-undecaprenyl diphosphate + beta-D-GlcNAc-(1-&gt;4)-Mur2Ac(oyl-L-Ala-gamma-D-Glu-L-Lys-D-Ala-D-Ala)-di-trans,octa-cis-undecaprenyl diphosphate = [GlcNAc-(1-&gt;4)-Mur2Ac(oyl-L-Ala-gamma-D-Glu-L-Lys-D-Ala-D-Ala)](n+1)-di-trans,octa-cis-undecaprenyl diphosphate + di-trans,octa-cis-undecaprenyl diphosphate + H(+). It participates in cell wall biogenesis; peptidoglycan biosynthesis. In terms of biological role, peptidoglycan polymerase that catalyzes glycan chain elongation from lipid-linked precursors. The polypeptide is Biosynthetic peptidoglycan transglycosylase (Salmonella paratyphi B (strain ATCC BAA-1250 / SPB7)).